The primary structure comprises 441 residues: MFS-type transporter (441 aa).

The tract at residues 1–47 (MPPQQEQDTDSDAIRSYNEESKSETPGCIPDAMLSSDETSNDVASDI) is disordered. A run of 10 helical transmembrane segments spans residues 61–81 (TLCGHFLFMNTWGFINSFGIF), 95–115 (DISWIGSIQVFLSFFVGAFVG), 125–145 (LVLSCGTILVLIGIFTASLST), 150–170 (LILSQGICCGLGNGFLVTPAV), 183–203 (LAIGISTCGSVTGALVFNSMA), 212–232 (FGWTMRAIGFVQAATLLFVVV), 259–279 (FFTIGMFFNFWAVFFGYYYIA), 289–309 (TLTYTQSLNLLLILNGVGVFG), 323–343 (LELLIPTCLVAAVATFSWIAV), and 351–371 (VWTVFYGIIGGSILSLFPAGI). N-linked (GlcNAc...) asparagine glycosylation occurs at Asn388. 2 helical membrane-spanning segments follow: residues 389–409 (FTVISFATLTGNPIAGAIITA) and 415–435 (YGAQAFMGSSFIVGTAFIVAA).

The protein belongs to the major facilitator superfamily. Monocarboxylate porter (TC 2.A.1.13) family.

It is found in the membrane. Functionally, MFS-type transporter; part of the gene cluster that mediates the biosynthesis of butenolide, a mycotoxin that shows antibiotic activity but does not seem to play a major role in the spread of head blight in wheat. This chain is MFS-type transporter, found in Gibberella zeae (strain ATCC MYA-4620 / CBS 123657 / FGSC 9075 / NRRL 31084 / PH-1) (Wheat head blight fungus).